Here is a 439-residue protein sequence, read N- to C-terminus: GTPase Obg (439 aa).

The Obg domain maps to 1–159; sequence MAFVDQAQIE…RNLKLELKVL (159 aa). The OBG-type G domain maps to 160-336; that stretch reads ADVGLVGFPS…LMRLTADMLA (177 aa). GTP-binding positions include 166-173, 191-195, 213-216, 283-286, and 317-319; these read GFPSAGKS, FTTLS, DLPG, TKMD, and SSI. Residues Ser173 and Thr193 each contribute to the Mg(2+) site. The interval 338 to 357 is disordered; it reads APAPESYRPETKNDTSEKSY. A compositionally biased stretch (basic and acidic residues) spans 344 to 354; that stretch reads YRPETKNDTSE. One can recognise an OCT domain in the interval 358 to 439; sequence TFKPETHDFT…NSDFVFEFSE (82 aa).

The protein belongs to the TRAFAC class OBG-HflX-like GTPase superfamily. OBG GTPase family. As to quaternary structure, monomer. Mg(2+) is required as a cofactor.

The protein resides in the cytoplasm. An essential GTPase which binds GTP, GDP and possibly (p)ppGpp with moderate affinity, with high nucleotide exchange rates and a fairly low GTP hydrolysis rate. Plays a role in control of the cell cycle, stress response, ribosome biogenesis and in those bacteria that undergo differentiation, in morphogenesis control. The protein is GTPase Obg of Leuconostoc mesenteroides subsp. mesenteroides (strain ATCC 8293 / DSM 20343 / BCRC 11652 / CCM 1803 / JCM 6124 / NCDO 523 / NBRC 100496 / NCIMB 8023 / NCTC 12954 / NRRL B-1118 / 37Y).